The primary structure comprises 216 residues: MGQKVNPIGLRLGINKNWNSRWYADKSYRSMLYEDLKIRGYLKKKLYHAGISHIDIERAVNKAKVNIYAARPGIIIGKKGAEIEKLKKELENVSSSEIIINILEVRKPEIDAQLVAENIATQLERRVAFRRAMKKCVLTALKFGAKGIRVSCSGRLGGAEMSRTEWYREGRVPLHTLRADIDSGFTEAKTAYGQIGIKVLIFHGEVLPGRKELEKP.

The KH type-2 domain maps to 38 to 106 (IRGYLKKKLY…EIIINILEVR (69 aa)).

The protein belongs to the universal ribosomal protein uS3 family. As to quaternary structure, part of the 30S ribosomal subunit. Forms a tight complex with proteins S10 and S14.

In terms of biological role, binds the lower part of the 30S subunit head. Binds mRNA in the 70S ribosome, positioning it for translation. The chain is Small ribosomal subunit protein uS3 from Syntrophus aciditrophicus (strain SB).